Consider the following 353-residue polypeptide: Probable butyrate kinase (353 aa).

The protein belongs to the acetokinase family.

The protein resides in the cytoplasm. The catalysed reaction is butanoate + ATP = butanoyl phosphate + ADP. The chain is Probable butyrate kinase from Bacteroides thetaiotaomicron (strain ATCC 29148 / DSM 2079 / JCM 5827 / CCUG 10774 / NCTC 10582 / VPI-5482 / E50).